The chain runs to 365 residues: Phosphatidylcholine:ceramide cholinephosphotransferase 2 (365 aa).

A disordered region spans residues 9–50 (LEGHLESQTNDSTNTYTSPTEAVEEEGKNGKGKPKTLSNGLR). Polar residues predominate over residues 14–28 (ESQTNDSTNTYTSPT). Transmembrane regions (helical) follow at residues 80 to 100 (GIAF…ITVV), 128 to 148 (FSVS…QWLF), 159 to 179 (FFFI…VTTL), 219 to 239 (ILCG…TYLF), and 248 to 268 (FWWY…CILV). Residue His-229 is part of the active site. Active-site residues include His-272 and Asp-276. Residues 273–290 (YTVDVIIAYYITTRLFWW) traverse the membrane as a helical segment. The Cytoplasmic segment spans residues 291 to 365 (YHSMANEKNL…KIGEDNEKST (75 aa)). 4 S-palmitoyl cysteine lipidation sites follow: Cys-331, Cys-332, Cys-343, and Cys-348.

Belongs to the sphingomyelin synthase family. In terms of processing, palmitoylated on Cys-331, Cys-332, Cys-343 and Cys-348; which plays an important role in plasma membrane localization. Highest expression is detected in cortical bone, followed by vertebrae, kidney and liver. Expression levels are very low in spleen, muscle, heart, brown fat and thymus. Expressed in macrophages.

The protein localises to the cell membrane. Its subcellular location is the golgi apparatus membrane. The catalysed reaction is an N-acylsphing-4-enine + a 1,2-diacyl-sn-glycero-3-phosphocholine = a sphingomyelin + a 1,2-diacyl-sn-glycerol. It carries out the reaction an N-acylsphinganine + a 1,2-diacyl-sn-glycero-3-phosphocholine = an N-acylsphinganine-1-phosphocholine + a 1,2-diacyl-sn-glycerol. The enzyme catalyses an N-acyl-(4R)-4-hydroxysphinganine + a 1,2-diacyl-sn-glycero-3-phosphocholine = an N-acyl-(4R)-4-hydroxysphinganine-phosphocholine + a 1,2-diacyl-sn-glycerol. It catalyses the reaction an N-acylsphing-4-enine + a 1,2-diacyl-sn-glycero-3-phosphoethanolamine = an N-acylsphing-4-enine 1-phosphoethanolamine + a 1,2-diacyl-sn-glycerol. The catalysed reaction is an N-acylsphinganine + a 1,2-diacyl-sn-glycero-3-phosphoethanolamine = an N-acylsphinganine-1-phosphoethanolamine + a 1,2-diacyl-sn-glycerol. It carries out the reaction an N-acyl-(4R)-4-hydroxysphinganine + a 1,2-diacyl-sn-glycero-3-phosphoethanolamine = an N-acyl-(4R)-4-hydroxysphinganine-1-phosphoethanolamine + a 1,2-diacyl-sn-glycerol. The enzyme catalyses 1,2-dihexadecanoyl-sn-glycero-3-phosphocholine + an N-acylsphing-4-enine = 1,2-dihexadecanoyl-sn-glycerol + a sphingomyelin. It catalyses the reaction 1-(9Z-octadecenoyl)-2-acyl-sn-3-glycerol + a sphingomyelin = a 1-(9Z-octadecenoyl)-2-acyl-sn-glycero-3-phosphocholine + an N-acylsphing-4-enine. The catalysed reaction is N-hexadecanoylsphinganine + a 1,2-diacyl-sn-glycero-3-phosphocholine = N-hexadecanoyl-sphinganine-1-phosphocholine + a 1,2-diacyl-sn-glycerol. It carries out the reaction N-hexadecanoyl-(4R)-hydroxysphinganine + a 1,2-diacyl-sn-glycero-3-phosphocholine = N-hexadecanoyl-(4R)-hydroxysphinganine-phosphocholine + a 1,2-diacyl-sn-glycerol. The enzyme catalyses N-hexadecanoylsphinganine + a 1,2-diacyl-sn-glycero-3-phosphoethanolamine = N-hexadecanoyl-sphinganine-1-phosphoethanolamine + a 1,2-diacyl-sn-glycerol. It catalyses the reaction N-hexadecanoyl-(4R)-hydroxysphinganine + a 1,2-diacyl-sn-glycero-3-phosphoethanolamine = N-hexadecanoyl-(4R)-hydroxysphinganine-1-phosphoethanolamine + a 1,2-diacyl-sn-glycerol. The protein operates within sphingolipid metabolism. Sphingomyelin synthase that primarily contributes to sphingomyelin synthesis and homeostasis at the plasma membrane. Catalyzes the reversible transfer of phosphocholine moiety in sphingomyelin biosynthesis: in the forward reaction transfers phosphocholine head group of phosphatidylcholine (PC) on to ceramide (CER) to form ceramide phosphocholine (sphingomyelin, SM) and diacylglycerol (DAG) as by-product, and in the reverse reaction transfers phosphocholine from SM to DAG to form PC and CER. The direction of the reaction appears to depend on the levels of CER and DAG in the plasma membrane. Does not use free phosphorylcholine or CDP-choline as donors. Can also transfer phosphoethanolamine head group of phosphatidylethanolamine (PE) on to ceramide (CER) to form ceramide phosphoethanolamine (CPE). Regulates receptor-mediated signal transduction via mitogenic DAG and proapoptotic CER, as well as via SM, a structural component of membrane rafts that serve as platforms for signal transduction and protein sorting. To a lesser extent, plays a role in secretory transport via regulation of DAG pool at the Golgi apparatus and its downstream effects on PRKD1. Required for normal bone matrix mineralization. In Mus musculus (Mouse), this protein is Phosphatidylcholine:ceramide cholinephosphotransferase 2 (Sgms2).